The primary structure comprises 303 residues: Uricase (303 aa).

Residues Lys12 and Thr60 each act as charge relay system in the active site. Residues Thr60, Asp61, Phe162, Arg179, Val234, Gln235, and Asn261 each coordinate urate. His263 acts as the Charge relay system in catalysis. Residues 301–303 (TKL) carry the Microbody targeting signal motif.

This sequence belongs to the uricase family.

It localises to the peroxisome. The enzyme catalyses urate + O2 + H2O = 5-hydroxyisourate + H2O2. It functions in the pathway purine metabolism; urate degradation; (S)-allantoin from urate: step 1/3. Catalyzes the oxidation of uric acid to 5-hydroxyisourate, which is further processed to form (S)-allantoin. This is Uricase from Cyberlindnera jadinii (Torula yeast).